The primary structure comprises 410 residues: Sporulation killing factor maturation protein SkfB (410 aa).

In terms of domain architecture, Radical SAM core spans 103–314 (SYLPISCTLQ…LREARHKWGD (212 aa)). [4Fe-4S] cluster contacts are provided by Cys117, Cys121, Cys124, Cys380, Cys385, and Cys387.

This sequence belongs to the radical SAM superfamily. The cofactor is [4Fe-4S] cluster.

The protein resides in the cytoplasm. Its function is as follows. Catalyzes the formation of the thioether bond required for production of the sporulation killing factor (SKF) from SkfA. Forms the cysteine-methionine thioether bond found in SKF; the acceptor amino acid can be hydrophobic, aromatic or a small hydrophilic amino acid but not a larger hydrophilic amino acid, i.e. Met=Ala, Phe, Leu, Tyr&gt;Asn, Ser&gt;&gt;Gln, Glu, Lys. The relative position of Cys and Met in the substrate cannot be inverted, in vitro the thioether bond cannot be made in the absence of the SkfA propeptide, suggesting this is the first reaction in SKF maturation. In vitro, in the absence of a second substrate, cleaves S-adenosyl-L-methionine into Met and 5'-dA. The protein is Sporulation killing factor maturation protein SkfB of Bacillus subtilis (strain 168).